The chain runs to 176 residues: Peptide methionine sulfoxide reductase MsrA (176 aa).

Cysteine 10 is a catalytic residue.

Belongs to the MsrA Met sulfoxide reductase family.

The catalysed reaction is L-methionyl-[protein] + [thioredoxin]-disulfide + H2O = L-methionyl-(S)-S-oxide-[protein] + [thioredoxin]-dithiol. It catalyses the reaction [thioredoxin]-disulfide + L-methionine + H2O = L-methionine (S)-S-oxide + [thioredoxin]-dithiol. Its function is as follows. Has an important function as a repair enzyme for proteins that have been inactivated by oxidation. Catalyzes the reversible oxidation-reduction of methionine sulfoxide in proteins to methionine. This is Peptide methionine sulfoxide reductase MsrA from Leptospira borgpetersenii serovar Hardjo-bovis (strain JB197).